Here is a 200-residue protein sequence, read N- to C-terminus: Recombination protein RecR (200 aa).

The C4-type zinc-finger motif lies at cysteine 58 to cysteine 75. The region spanning serine 82–proline 177 is the Toprim domain.

The protein belongs to the RecR family.

Its function is as follows. May play a role in DNA repair. It seems to be involved in an RecBC-independent recombinational process of DNA repair. It may act with RecF and RecO. The sequence is that of Recombination protein RecR from Chlamydia abortus (strain DSM 27085 / S26/3) (Chlamydophila abortus).